Consider the following 335-residue polypeptide: GTPase Obg (335 aa).

Positions 1-158 constitute an Obg domain; that stretch reads MFVDQITLEL…RLVELELKLI (158 aa). In terms of domain architecture, OBG-type G spans 159 to 334; the sequence is ADIGLVGFPN…LHDLFKSKLS (176 aa). Residues 165-172, 190-194, 215-218, 285-288, and 315-317 contribute to the GTP site; these read GFPNAGKS, FTTLH, DIPG, NKID, and SGL. Mg(2+)-binding residues include Ser-172 and Thr-192.

This sequence belongs to the TRAFAC class OBG-HflX-like GTPase superfamily. OBG GTPase family. As to quaternary structure, monomer. Requires Mg(2+) as cofactor.

The protein localises to the cytoplasm. Functionally, an essential GTPase which binds GTP, GDP and possibly (p)ppGpp with moderate affinity, with high nucleotide exchange rates and a fairly low GTP hydrolysis rate. Plays a role in control of the cell cycle, stress response, ribosome biogenesis and in those bacteria that undergo differentiation, in morphogenesis control. This chain is GTPase Obg, found in Chlamydia muridarum (strain MoPn / Nigg).